Reading from the N-terminus, the 94-residue chain is Small ribosomal subunit protein eS24 (94 aa).

This sequence belongs to the eukaryotic ribosomal protein eS24 family.

The protein is Small ribosomal subunit protein eS24 of Nanoarchaeum equitans (strain Kin4-M).